The sequence spans 389 residues: 26S proteasome regulatory subunit 6B homolog (389 aa).

ATP is bound at residue 175–182; sequence GPPGTGKT.

It belongs to the AAA ATPase family.

It is found in the cytoplasm. It localises to the nucleus. Functionally, the 26S proteasome is involved in the ATP-dependent degradation of ubiquitinated proteins. The regulatory (or ATPase) complex confers ATP dependency and substrate specificity to the 26S complex. This Schizosaccharomyces pombe (strain 972 / ATCC 24843) (Fission yeast) protein is 26S proteasome regulatory subunit 6B homolog (rpt3).